A 290-amino-acid polypeptide reads, in one-letter code: NAD kinase (290 aa).

Catalysis depends on D72, which acts as the Proton acceptor. Residues 72-73 (DG), K77, 145-146 (NE), D175, 186-191 (TAYSLS), and A210 each bind NAD(+).

The protein belongs to the NAD kinase family. The cofactor is a divalent metal cation.

The protein localises to the cytoplasm. It catalyses the reaction NAD(+) + ATP = ADP + NADP(+) + H(+). Involved in the regulation of the intracellular balance of NAD and NADP, and is a key enzyme in the biosynthesis of NADP. Catalyzes specifically the phosphorylation on 2'-hydroxyl of the adenosine moiety of NAD to yield NADP. The protein is NAD kinase of Bacteroides fragilis (strain YCH46).